The sequence spans 94 residues: Phosphoribosyl-ATP pyrophosphatase (94 aa).

The protein belongs to the PRA-PH family.

It is found in the cytoplasm. The enzyme catalyses 1-(5-phospho-beta-D-ribosyl)-ATP + H2O = 1-(5-phospho-beta-D-ribosyl)-5'-AMP + diphosphate + H(+). The protein operates within amino-acid biosynthesis; L-histidine biosynthesis; L-histidine from 5-phospho-alpha-D-ribose 1-diphosphate: step 2/9. The polypeptide is Phosphoribosyl-ATP pyrophosphatase (Saccharolobus islandicus (strain Y.N.15.51 / Yellowstone #2) (Sulfolobus islandicus)).